We begin with the raw amino-acid sequence, 495 residues long: Germacrene A acid 8-beta-hydroxylase (495 aa).

Residues 3–23 (PFTTFSLVASSLILLICWALV) form a helical; Signal-anchor for type II membrane protein membrane-spanning segment. Asparagine 103 carries N-linked (GlcNAc...) asparagine glycosylation. Cysteine 433 contacts heme.

The protein belongs to the cytochrome P450 family. Heme is required as a cofactor. As to expression, mostly expressed in leaves and flowers, and, to a lower extent, in roots and stems.

The protein localises to the membrane. The enzyme catalyses germacra-1(10),4,11(13)-trien-12-oate + reduced [NADPH--hemoprotein reductase] + O2 = 8beta-hydroxygermacra-1(10),4,11(13)-trien-12-oate + oxidized [NADPH--hemoprotein reductase] + H2O + H(+). It catalyses the reaction germacra-1(10),4,11(13)-trien-12-oate + reduced [NADPH--hemoprotein reductase] + O2 = 8-epi-inunolide + oxidized [NADPH--hemoprotein reductase] + 2 H2O. The catalysed reaction is germacra-1(10),4,11(13)-trien-12-oate + reduced [NADPH--hemoprotein reductase] + O2 = 8alpha-hydroxygermacra-1(10),4,11(13)-trien-12-oate + oxidized [NADPH--hemoprotein reductase] + H2O + H(+). Its pathway is secondary metabolite biosynthesis; terpenoid biosynthesis. Functionally, involved in the biosynthesis of germacrene-derived sesquiterpene lactones. Hydroxylates germacrene A acid to 8-beta-hydroxy-germacrene A and 8-alpha-hydroxy-germacrene A acids. Unlike 8-alpha-hydroxy-germacrene A acid with is spontaneously converted into inunolide (12, 8-alpha), 8-beta-hydroxy-germacrene A cannot undergo spontaneous lactonization. The protein is Germacrene A acid 8-beta-hydroxylase of Inula hupehensis (Inula helianthus-aquatilis subsp. hupehensis).